A 689-amino-acid chain; its full sequence is Glycine--tRNA ligase beta subunit (689 aa).

This sequence belongs to the class-II aminoacyl-tRNA synthetase family. Tetramer of two alpha and two beta subunits.

The protein localises to the cytoplasm. The catalysed reaction is tRNA(Gly) + glycine + ATP = glycyl-tRNA(Gly) + AMP + diphosphate. The polypeptide is Glycine--tRNA ligase beta subunit (Acinetobacter baumannii (strain ATCC 17978 / DSM 105126 / CIP 53.77 / LMG 1025 / NCDC KC755 / 5377)).